We begin with the raw amino-acid sequence, 131 residues long: Small ribosomal subunit protein eS24 (131 aa).

A disordered region spans residues 93 to 131 (RHGLYEKKKTSRKQRKERKNRMKKVRGTKKASVGAAGKK). Positions 101–121 (KTSRKQRKERKNRMKKVRGTK) are enriched in basic residues.

This sequence belongs to the eukaryotic ribosomal protein eS24 family. Component of the small ribosomal subunit. Part of the small subunit (SSU) processome, composed of more than 70 proteins and the RNA chaperone small nucleolar RNA (snoRNA) U3.

The protein resides in the cytoplasm. It localises to the nucleus. It is found in the nucleolus. Its function is as follows. Component of the small ribosomal subunit. The ribosome is a large ribonucleoprotein complex responsible for the synthesis of proteins in the cell. Required for processing of pre-rRNA and maturation of 40S ribosomal subunits. Part of the small subunit (SSU) processome, first precursor of the small eukaryotic ribosomal subunit. During the assembly of the SSU processome in the nucleolus, many ribosome biogenesis factors, an RNA chaperone and ribosomal proteins associate with the nascent pre-rRNA and work in concert to generate RNA folding, modifications, rearrangements and cleavage as well as targeted degradation of pre-ribosomal RNA by the RNA exosome. The chain is Small ribosomal subunit protein eS24 (rps24) from Ictalurus punctatus (Channel catfish).